A 376-amino-acid polypeptide reads, in one-letter code: tRNA-specific 2-thiouridylase MnmA (376 aa).

ATP-binding positions include 17–24 and methionine 43; that span reads GMSGGVDS. The segment at 103–105 is interaction with target base in tRNA; it reads NPD. Cysteine 108 serves as the catalytic Nucleophile. Cysteine 108 and cysteine 204 are oxidised to a cystine. Glycine 132 is an ATP binding site. An interaction with tRNA region spans residues 154 to 156; the sequence is KDQ. The active-site Cysteine persulfide intermediate is the cysteine 204. The interval 316-317 is interaction with tRNA; it reads RY.

Belongs to the MnmA/TRMU family.

It is found in the cytoplasm. The catalysed reaction is S-sulfanyl-L-cysteinyl-[protein] + uridine(34) in tRNA + AH2 + ATP = 2-thiouridine(34) in tRNA + L-cysteinyl-[protein] + A + AMP + diphosphate + H(+). Its function is as follows. Catalyzes the 2-thiolation of uridine at the wobble position (U34) of tRNA, leading to the formation of s(2)U34. This Pseudomonas savastanoi pv. phaseolicola (strain 1448A / Race 6) (Pseudomonas syringae pv. phaseolicola (strain 1448A / Race 6)) protein is tRNA-specific 2-thiouridylase MnmA.